The following is a 248-amino-acid chain: Pyridoxine 5'-phosphate synthase (248 aa).

A 3-amino-2-oxopropyl phosphate-binding site is contributed by asparagine 12. 14–15 (DH) lines the 1-deoxy-D-xylulose 5-phosphate pocket. Residue arginine 23 coordinates 3-amino-2-oxopropyl phosphate. The active-site Proton acceptor is the histidine 48. Residues arginine 50 and histidine 55 each contribute to the 1-deoxy-D-xylulose 5-phosphate site. Residue glutamate 75 is the Proton acceptor of the active site. Threonine 105 provides a ligand contact to 1-deoxy-D-xylulose 5-phosphate. Histidine 196 serves as the catalytic Proton donor. Residues glycine 197 and 218-219 (GH) each bind 3-amino-2-oxopropyl phosphate.

The protein belongs to the PNP synthase family. In terms of assembly, homooctamer; tetramer of dimers.

It localises to the cytoplasm. The enzyme catalyses 3-amino-2-oxopropyl phosphate + 1-deoxy-D-xylulose 5-phosphate = pyridoxine 5'-phosphate + phosphate + 2 H2O + H(+). The protein operates within cofactor biosynthesis; pyridoxine 5'-phosphate biosynthesis; pyridoxine 5'-phosphate from D-erythrose 4-phosphate: step 5/5. Its function is as follows. Catalyzes the complicated ring closure reaction between the two acyclic compounds 1-deoxy-D-xylulose-5-phosphate (DXP) and 3-amino-2-oxopropyl phosphate (1-amino-acetone-3-phosphate or AAP) to form pyridoxine 5'-phosphate (PNP) and inorganic phosphate. In Stutzerimonas stutzeri (strain A1501) (Pseudomonas stutzeri), this protein is Pyridoxine 5'-phosphate synthase.